Consider the following 317-residue polypeptide: Melanocyte-stimulating hormone receptor (317 aa).

Residues 1-20 are compositionally biased toward polar residues; it reads MPVQGSQRSLLGAVNSTPTA. The tract at residues 1–23 is disordered; sequence MPVQGSQRSLLGAVNSTPTATPH. Over 1–37 the chain is Extracellular; the sequence is MPVQGSQRSLLGAVNSTPTATPHLRPAANQTGPQCLE. N-linked (GlcNAc...) asparagine glycosylation is present at Asn-29. The chain crosses the membrane as a helical span at residues 38 to 63; that stretch reads VSIPDGLFLCLGLVSLVENTLVVAAI. Topologically, residues 64-72 are cytoplasmic; the sequence is AKNRNLHSP. The chain crosses the membrane as a helical span at residues 73 to 93; it reads MYCFICCLALSDLLVSVSSVL. Residues 94 to 118 are Extracellular-facing; that stretch reads ETAVLLLLGAGALAAQATVVQQLGN. A helical transmembrane segment spans residues 119–140; that stretch reads VIDVLLCSSMVSSLFFLGAIAM. Topologically, residues 141–163 are cytoplasmic; sequence DRYISIFYALRYHSIVTLARARR. A helical transmembrane segment spans residues 164 to 183; the sequence is AIAAIWAASILSSTLFIAYC. At 184 to 191 the chain is on the extracellular side; that stretch reads DRTAALLC. A helical membrane pass occupies residues 192-211; it reads LVVFFLAMLVLMAVLYVHML. Residues 212 to 240 are Cytoplasmic-facing; sequence TQARQHAQGIARLHKRQRPVQQGWGLKGA. The helical transmembrane segment at 241 to 266 threads the bilayer; it reads ATLTILLGVFFLCWGPFFLHLTLIAV. Residues 267–279 are Extracellular-facing; it reads CPQHPTCSCIFKN. Residues 280-300 form a helical membrane-spanning segment; that stretch reads FRLFLALIVCNAIVDPLIYAF. Topologically, residues 301–317 are cytoplasmic; the sequence is RSQELRKTLKEVLLFFW.

Belongs to the G-protein coupled receptor 1 family. In terms of assembly, interacts with MGRN1, but does not undergo MGRN1-mediated ubiquitination; this interaction competes with GNAS-binding and thus inhibits agonist-induced cAMP production. Interacts with OPN3; the interaction results in a decrease in MC1R-mediated cAMP signaling and ultimately a decrease in melanin production in melanocytes.

The protein localises to the cell membrane. Functionally, receptor for MSH (alpha, beta and gamma) and ACTH. The activity of this receptor is mediated by G proteins which activate adenylate cyclase. Mediates melanogenesis, the production of eumelanin (black/brown) and phaeomelanin (red/yellow), via regulation of cAMP signaling in melanocytes. The polypeptide is Melanocyte-stimulating hormone receptor (MC1R) (Lemur catta (Ring-tailed lemur)).